We begin with the raw amino-acid sequence, 438 residues long: Phosphoribosylamine--glycine ligase (438 aa).

The region spanning 108-316 (REFMERNDIP…LVEIAEGIVK (209 aa)) is the ATP-grasp domain. 135 to 194 (IDEYGKPVVVKPLGLTGGKGVKVVGYQLKDNEEAKEYAEYLIKKDGKVLIEERTDGVEFT) is an ATP binding site. Residues Gln-274, Glu-286, and Asn-288 each contribute to the Mg(2+) site. The Mn(2+) site is built by Gln-274, Glu-286, and Asn-288.

The protein belongs to the GARS family. Requires Mg(2+) as cofactor. It depends on Mn(2+) as a cofactor.

The enzyme catalyses 5-phospho-beta-D-ribosylamine + glycine + ATP = N(1)-(5-phospho-beta-D-ribosyl)glycinamide + ADP + phosphate + H(+). Its pathway is purine metabolism; IMP biosynthesis via de novo pathway; N(1)-(5-phospho-D-ribosyl)glycinamide from 5-phospho-alpha-D-ribose 1-diphosphate: step 2/2. This Pyrococcus abyssi (strain GE5 / Orsay) protein is Phosphoribosylamine--glycine ligase.